A 380-amino-acid chain; its full sequence is Cytochrome b (380 aa).

4 consecutive transmembrane segments (helical) span residues 33–53, 77–98, 113–133, and 178–198; these read LGSL…FLAM, WVIR…FLHI, WNIG…GYVL, and FFTF…LHLL. Positions 83 and 97 each coordinate heme b. H182 and H196 together coordinate heme b. H201 is an a ubiquinone binding site. 4 helical membrane-spanning segments follow: residues 226 to 246, 288 to 308, 320 to 340, and 347 to 367; these read TKDI…VLFS, LGGV…PMLH, LSQL…WIGG, and FITI…ILVP.

The protein belongs to the cytochrome b family. In terms of assembly, the cytochrome bc1 complex contains 11 subunits: 3 respiratory subunits (MT-CYB, CYC1 and UQCRFS1), 2 core proteins (UQCRC1 and UQCRC2) and 6 low-molecular weight proteins (UQCRH/QCR6, UQCRB/QCR7, UQCRQ/QCR8, UQCR10/QCR9, UQCR11/QCR10 and a cleavage product of UQCRFS1). This cytochrome bc1 complex then forms a dimer. Heme b is required as a cofactor.

It localises to the mitochondrion inner membrane. Component of the ubiquinol-cytochrome c reductase complex (complex III or cytochrome b-c1 complex) that is part of the mitochondrial respiratory chain. The b-c1 complex mediates electron transfer from ubiquinol to cytochrome c. Contributes to the generation of a proton gradient across the mitochondrial membrane that is then used for ATP synthesis. This chain is Cytochrome b (MT-CYB), found in Nomascus leucogenys (Northern white-cheeked gibbon).